We begin with the raw amino-acid sequence, 241 residues long: tRNA (guanine-N(7)-)-methyltransferase B (241 aa).

S-adenosyl-L-methionine contacts are provided by glycine 61, glutamate 84, arginine 86, asparagine 117, alanine 118, and leucine 137. Residue aspartate 140 is part of the active site. The segment at 141–149 is alphaC helix; sequence PHFKKTKHK. Threonine 215 and glutamate 217 together coordinate S-adenosyl-L-methionine. The alpha6 helix stretch occupies residues 215 to 223; the sequence is TEEGKKVQR.

The protein belongs to the class I-like SAM-binding methyltransferase superfamily. TrmB family. As to quaternary structure, catalytic component of the METTL1-WDR4 complex, composed of mettl1 and wdr4.

It localises to the nucleus. It carries out the reaction guanosine(46) in tRNA + S-adenosyl-L-methionine = N(7)-methylguanosine(46) in tRNA + S-adenosyl-L-homocysteine. It catalyses the reaction a guanosine in mRNA + S-adenosyl-L-methionine = an N(7)-methylguanosine in mRNA + S-adenosyl-L-homocysteine. The enzyme catalyses a guanosine in miRNA + S-adenosyl-L-methionine = an N(7)-methylguanosine in miRNA + S-adenosyl-L-homocysteine. The protein operates within tRNA modification; N(7)-methylguanine-tRNA biosynthesis. Its function is as follows. Catalytic component of METTL1-WDR4 methyltransferase complex that mediates the formation of N(7)-methylguanine in a subset of RNA species, such as tRNAs, mRNAs and microRNAs (miRNAs). Catalyzes the formation of N(7)-methylguanine at position 46 (m7G46) in a large subset of tRNAs that contain the 5'-RAGGU-3' motif within the variable loop. M7G46 interacts with C13-G22 in the D-loop to stabilize tRNA tertiary structure and protect tRNAs from decay. Also acts as a methyltransferase for a subset of internal N(7)-methylguanine in mRNAs. Internal N(7)-methylguanine methylation of mRNAs in response to stress promotes their relocalization to stress granules, thereby suppressing their translation. Also methylates a specific subset of miRNAs. The sequence is that of tRNA (guanine-N(7)-)-methyltransferase B (mettl1-B) from Xenopus tropicalis (Western clawed frog).